A 255-amino-acid chain; its full sequence is 5-oxoprolinase subunit A (255 aa).

The protein belongs to the LamB/PxpA family. As to quaternary structure, forms a complex composed of PxpA, PxpB and PxpC.

It carries out the reaction 5-oxo-L-proline + ATP + 2 H2O = L-glutamate + ADP + phosphate + H(+). In terms of biological role, catalyzes the cleavage of 5-oxoproline to form L-glutamate coupled to the hydrolysis of ATP to ADP and inorganic phosphate. The polypeptide is 5-oxoprolinase subunit A (Corynebacterium efficiens (strain DSM 44549 / YS-314 / AJ 12310 / JCM 11189 / NBRC 100395)).